Consider the following 83-residue polypeptide: Defensin-2 (83 aa).

Positions 1 to 33 are cleaved as a signal peptide; the sequence is MAGKGVGTPLSALFLLVLLVVTIGMMEVQVAEG. 4 disulfides stabilise this stretch: cysteine 36-cysteine 82, cysteine 47-cysteine 67, cysteine 53-cysteine 76, and cysteine 57-cysteine 78.

This sequence belongs to the DEFL family.

Its subcellular location is the secreted. Functionally, plant defense peptide. Has antifungal activity. This is Defensin-2 from Pinus sylvestris (Scotch pine).